Here is a 176-residue protein sequence, read N- to C-terminus: MPAGLICIARIGAPHGVRGAMRLWSFTAEPLAVMDYGPLATKDGARSFEIATARPAKDHLVVTLKGVATREEAERLNGLELYVPRDRLPPTEDGEYYHADLIGLPAITPAGEPLGRVLAIHNFGAGDIIEIAPPQGATLLLPFTNAVVPTVDLTAGHVVIELPTEIEGDTPNHPEA.

The PRC barrel domain occupies 93 to 170 (DGEYYHADLI…ELPTEIEGDT (78 aa)).

The protein belongs to the RimM family. In terms of assembly, binds ribosomal protein uS19.

The protein resides in the cytoplasm. Its function is as follows. An accessory protein needed during the final step in the assembly of 30S ribosomal subunit, possibly for assembly of the head region. Essential for efficient processing of 16S rRNA. May be needed both before and after RbfA during the maturation of 16S rRNA. It has affinity for free ribosomal 30S subunits but not for 70S ribosomes. The protein is Ribosome maturation factor RimM of Rhodopseudomonas palustris (strain BisB5).